Consider the following 271-residue polypeptide: MTVKQSQASRLSPIFEPCRDDDRAALIGYLPTGYPDVPTSVQAMVALVESGCDIVEVGVPYSDPGMDGPTIARATEAALHGGVRVRDTLAAVEAISAAGGRAVVMTYWNPVLRYGVDAFARDLAAAGGYGLITPDLIPDEAGQWLAASERHGLDRIFLVAPSSTPQRLALTVEASRGFVYAASTMGVTGARDAVSHAAPELVSRVREISDIPVGVGLGVRSREQAAQIGGYADGVIVGSALVSALGDGGLTALRALTEELAAGVRQRAAAS.

Active-site proton acceptor residues include glutamate 56 and aspartate 67.

The protein belongs to the TrpA family. As to quaternary structure, tetramer of two alpha and two beta chains.

It catalyses the reaction (1S,2R)-1-C-(indol-3-yl)glycerol 3-phosphate + L-serine = D-glyceraldehyde 3-phosphate + L-tryptophan + H2O. It functions in the pathway amino-acid biosynthesis; L-tryptophan biosynthesis; L-tryptophan from chorismate: step 5/5. The alpha subunit is responsible for the aldol cleavage of indoleglycerol phosphate to indole and glyceraldehyde 3-phosphate. This Mycolicibacterium paratuberculosis (strain ATCC BAA-968 / K-10) (Mycobacterium paratuberculosis) protein is Tryptophan synthase alpha chain.